A 767-amino-acid chain; its full sequence is MATYLEFIQQNEERDGVRFSWNVWPSSRLEATRMVVPLACLLTPLKERPDLPPVQYEPVLCSRPTCKAVLNPLCQVDYRAKLWACNFCFQRNQFPPAYGGISEVNQPAELMPQFSTIEYVIQRGAQSPLIFLYVVDTCLEEDDLQALKESLQMSLSLLPPDALVGLITFGRMVQVHELSCEGISKSYVFRGTKDLTAKQIQDMLGLTKPAMPMQQARPAQPQEHPFASSRFLQPVHKIDMNLTDLLGELQRDPWPVTQGKRPLRSTGVALSIAVGLLEGTFPNTGARIMLFTGGPPTQGPGMVVGDELKIPIRSWHDIEKDNARFMKKATKHYEMLANRTAANGHCIDIYACALDQTGLLEMKCCANLTGGYMVMGDSFNTSLFKQTFQRIFTKDFNGDFRMAFGATLDVKTSRELKIAGAIGPCVSLNVKGPCVSENELGVGGTSQWKICGLDPTSTLGIYFEVVNQHNTPIPQGGRGAIQFVTHYQHSSTQRRIRVTTIARNWADVQSQLRHIEAAFDQEAAAVLMARLGVFRAESEEGPDVLRWLDRQLIRLCQKFGQYNKEDPTSFRLSDSFSLYPQFMFHLRRSPFLQVFNNSPDESSYYRHHFARQDLTQSLIMIQPILYSYSFHGPPEPVLLDSSSILADRILLMDTFFQIVIYLGETIAQWRKAGYQDMPEYENFKHLLQAPLDDAQEILQARFPMPRYINTEHGGSQARFLLSKVNPSQTHNNLYAWGQETGAPILTDDVSLQVFMDHLKKLAVSSAC.

Ala-2 carries the post-translational modification N-acetylalanine. Zn(2+) is bound by residues Cys-61, Cys-66, Cys-85, and Cys-88. Lys-564 carries the post-translational modification N6-acetyllysine. Residues 634-720 form a Gelsolin-like repeat; sequence PEPVLLDSSS…EHGGSQARFL (87 aa).

Belongs to the SEC23/SEC24 family. SEC23 subfamily. As to quaternary structure, COPII is composed of at least five proteins: the Sec23/24 complex, the Sec13/31 complex and Sar1. Interacts with SAR1A. In terms of tissue distribution, ubiquitously expressed.

The protein resides in the cytoplasmic vesicle. Its subcellular location is the COPII-coated vesicle membrane. It localises to the endoplasmic reticulum membrane. It is found in the cytoplasm. The protein localises to the cytosol. Functionally, component of the coat protein complex II (COPII) which promotes the formation of transport vesicles from the endoplasmic reticulum (ER). The coat has two main functions, the physical deformation of the endoplasmic reticulum membrane into vesicles and the selection of cargo molecules for their transport to the Golgi complex. In Homo sapiens (Human), this protein is Protein transport protein Sec23B.